The following is a 286-amino-acid chain: Phosphate import ATP-binding protein PstB (286 aa).

The region spanning 40–281 (VVAKDFSIFY…PRDRMTEDYI (242 aa)) is the ABC transporter domain. ATP is bound at residue 72–79 (GPSGCGKS).

This sequence belongs to the ABC transporter superfamily. Phosphate importer (TC 3.A.1.7) family. The complex is composed of two ATP-binding proteins (PstB), two transmembrane proteins (PstC and PstA) and a solute-binding protein (PstS).

The protein localises to the cell inner membrane. The enzyme catalyses phosphate(out) + ATP + H2O = ADP + 2 phosphate(in) + H(+). Part of the ABC transporter complex PstSACB involved in phosphate import. Responsible for energy coupling to the transport system. The protein is Phosphate import ATP-binding protein PstB of Chlorobium luteolum (strain DSM 273 / BCRC 81028 / 2530) (Pelodictyon luteolum).